Reading from the N-terminus, the 575-residue chain is Serine/threonine-protein kinase STY46 (575 aa).

Residues 116–140 (ADLDSTSNDAGHSSPTRKSIHPPPA) are disordered. Over residues 118-132 (LDSTSNDAGHSSPTR) the composition is skewed to polar residues. In terms of domain architecture, ACT spans 178–252 (EITFSTEDKP…AKIELQSQSW (75 aa)). The region spanning 290–543 (LKFGHKIASG…EIIEQLQEIA (254 aa)) is the Protein kinase domain. ATP-binding positions include 296–304 (IASGSYGDL) and Lys-317. The Proton acceptor role is filled by Asp-411. At Thr-443 the chain carries Phosphothreonine.

The protein belongs to the protein kinase superfamily. Ser/Thr protein kinase family. Autophosphorylated on serine and threonine residues. Autophosphorylated at Thr-443.

The protein localises to the cytoplasm. It is found in the cytosol. The enzyme catalyses L-seryl-[protein] + ATP = O-phospho-L-seryl-[protein] + ADP + H(+). It carries out the reaction L-threonyl-[protein] + ATP = O-phospho-L-threonyl-[protein] + ADP + H(+). Its activity is regulated as follows. Activated by autophosphorylation at Thr-443. Serine/threonine protein kinase that specifically phosphorylates chloroplast precursor proteins in the cytosol within the cleavable presequences (transit peptides). May be part of a cytosolic regulatory network involved in chloroplast protein import. Does not phosphorylate mitochondrion precursor proteins. Specific for ATP and does not utilize other NTPs. Plays a role in chloroplast biogenesis and differentiation in cotyledons, possibly through phosphorylation of chloroplast preproteins. This Arabidopsis thaliana (Mouse-ear cress) protein is Serine/threonine-protein kinase STY46.